An 895-amino-acid polypeptide reads, in one-letter code: Androgen receptor (895 aa).

Residues 1 to 533 are modulating; it reads MEVQLGLGRV…PIDYYFPPQK (533 aa). The interval 1–562 is interaction with ZNF318; it reads MEVQLGLGRV…GSCKVFFKRA (562 aa). Disordered regions lie at residues 33–155 and 175–211; these read VIQN…PTFP and QLLQ…YLGG. 2 stretches are compositionally biased toward low complexity: residues 44-81 and 175-200; these read AASA…GSPQ and QLLQ…ASGA. The residue at position 66 (S66) is a Phosphoserine; by CDK9. S79 is modified (phosphoserine). The span at 201–211 shows a compositional bias: polar residues; the sequence is PTSSKDNYLGG. A Phosphotyrosine; by CSK modification is found at Y208. Phosphoserine is present on S241. Y252 is modified (phosphotyrosine; by CSK and TNK2). 4 positions are modified to phosphotyrosine; by CSK: Y292, Y331, Y342, and Y347. Y348 carries the post-translational modification Phosphotyrosine; by CSK and TNK2. K371 participates in a covalent cross-link: Glycyl lysine isopeptide (Lys-Gly) (interchain with G-Cter in SUMO). Residue Y378 is modified to Phosphotyrosine; by CSK. Residue K496 forms a Glycyl lysine isopeptide (Lys-Gly) (interchain with G-Cter in SUMO) linkage. 2 positions are modified to phosphotyrosine; by CSK: Y510 and Y527. The segment at 527 to 894 is interaction with LPXN; it reads YYFPPQKTCL…GKVKPIYFHT (368 aa). Positions 534–607 form a DNA-binding region, nuclear receptor; that stretch reads TCLICGDEAS…AGMTLGARKL (74 aa). 2 consecutive NR C4-type zinc fingers follow at residues 535–555 and 571–595; these read CLIC…CGSC and CASR…LRKC. An interaction with HIPK3 region spans residues 547–637; it reads YGALTCGSCK…TEETAQKLTV (91 aa). The interaction with CCAR1 stretch occupies residues 567 to 894; sequence QKYLCASRND…GKVKPIYFHT (328 aa). The tract at residues 600–894 is interaction with KAT7; it reads MTLGARKLKK…GKVKPIYFHT (295 aa). S626 carries the phosphoserine; by STK4/MST1 modification. Residues 644 to 875 form the NR LBD domain; sequence ECQPIFLNVL…DFPEMMAEII (232 aa). 17beta-hydroxy-5alpha-androstan-3-one contacts are provided by N681 and R728. Glycyl lysine isopeptide (Lys-Gly) (interchain with G-Cter in ubiquitin) cross-links involve residues K821 and K823. T853 contributes to the 17beta-hydroxy-5alpha-androstan-3-one binding site. Y891 carries the phosphotyrosine; by CSK modification.

This sequence belongs to the nuclear hormone receptor family. NR3 subfamily. Binds DNA as a homodimer. Part of a ternary complex containing AR, EFCAB6/DJBP and PARK7. Interacts with HIPK3 and NR0B2 in the presence of androgen. The ligand binding domain interacts with KAT7/HBO1 in the presence of dihydrotestosterone. Interacts with EFCAB6/DJBP, PQBP1, RANBP9, RBAK, SPDEF, SRA1, TGFB1I1 and RREB1. Interacts with ZMIZ1/ZIMP10 and ZMIZ2/ZMIP7 which both enhance its transactivation activity. Interacts with SLC30A9 and RAD54L2/ARIP4. Interacts with MACROD1 (via macro domain). Interacts via the ligand-binding domain with LXXLL and FXXLF motifs from NCOA1, NCOA2, NCOA3 and MAGEA11. Interacts (via nuclear receptor DNA binding domain and nuclear receptor ligand binding domain) with NCOA4. The AR N-terminal poly-Gln region binds Ran resulting in enhancement of AR-mediated transactivation. Ran-binding decreases as the poly-Gln length increases. Interacts with HIP1 (via coiled coil domain). Interacts (via ligand-binding domain) with TRIM68. Interacts with TNK2. Interacts with USP26. Interacts with RNF6. Interacts (regulated by RNF6 probably through polyubiquitination) with RNF14; regulates AR transcriptional activity. Interacts with PRMT2 and TRIM24. Interacts with RACK1. Interacts with RANBP10; this interaction enhances dihydrotestosterone-induced AR transcriptional activity. Interacts with PRPF6 in a hormone-independent way; this interaction enhances dihydrotestosterone-induced AR transcriptional activity. Interacts with STK4/MST1. Interacts with ZIPK/DAPK3. Interacts with LPXN. Interacts with MAK. Part of a complex containing AR, MAK and NCOA3. Interacts with CRY1. Interacts with CCAR1 and GATA2. Interacts with ZNF318. Interacts with BUD31. Interacts with ARID4A. Interacts with ARID4B. Interacts (via NR LBD domain) with ZBTB7A; the interaction is direct and androgen-dependent. Interacts with NCOR1. Interacts with NCOR2. Interacts with CRY2 in a ligand-dependent manner. In terms of processing, phosphorylated in prostate cancer cells in response to several growth factors including EGF. Phosphorylation is induced by c-Src kinase (CSK). Tyr-510 is one of the major phosphorylation sites and an increase in phosphorylation and Src kinase activity is associated with prostate cancer progression. Phosphorylation by TNK2 enhances the DNA-binding and transcriptional activity. Phosphorylation at Ser-66 by CDK9 regulates AR promoter selectivity and cell growth. Sumoylated on Lys-371 (major) and Lys-496. Ubiquitinated. Deubiquitinated by USP26. 'Lys-6' and 'Lys-27'-linked polyubiquitination by RNF6 modulates AR transcriptional activity and specificity. Post-translationally, palmitoylated by ZDHHC7 and ZDHHC21. Palmitoylation is required for plasma membrane targeting and for rapid intracellular signaling via ERK and AKT kinases and cAMP generation.

The protein localises to the nucleus. Its subcellular location is the cytoplasm. Its function is as follows. Steroid hormone receptors are ligand-activated transcription factors that regulate eukaryotic gene expression and affect cellular proliferation and differentiation in target tissues. Transcription factor activity is modulated by bound coactivator and corepressor proteins like ZBTB7A that recruits NCOR1 and NCOR2 to the androgen response elements/ARE on target genes, negatively regulating androgen receptor signaling and androgen-induced cell proliferation. Transcription activation is also down-regulated by NR0B2. Activated, but not phosphorylated, by HIPK3 and ZIPK/DAPK3. The chain is Androgen receptor (AR) from Papio hamadryas (Hamadryas baboon).